The primary structure comprises 38 residues: RYGRSYAMSHMPMSRMGRKMYQNYMYRRMQATKMMQYH.

It belongs to the turripeptide family. As to expression, expressed by the venom duct.

The protein localises to the secreted. The polypeptide is Turripeptide GpIAa (Cryptogemma periscelida (Atlantic gem-turris)).